We begin with the raw amino-acid sequence, 175 residues long: Photosynthetic NDH subunit of subcomplex B 4, chloroplastic (175 aa).

Residues 1-24 (MAEAFTSFTFTNLHIPSSYNHSPK) constitute a chloroplast transit peptide. A helical transmembrane segment spans residues 95–111 (VYMFYIMFTCWGCLYFG).

In terms of assembly, part of the chloroplast NDH complex, composed of a mixture of chloroplast and nucleus encoded subunits. Component of the NDH subcomplex B, at least composed of PnsB1, PnsB2, PnsB3, PnsB4 and PnsB5.

It is found in the plastid. The protein localises to the chloroplast thylakoid membrane. Its function is as follows. NDH shuttles electrons from NAD(P)H:plastoquinone, via FMN and iron-sulfur (Fe-S) centers, to quinones in the photosynthetic chain and possibly in a chloroplast respiratory chain. The immediate electron acceptor for the enzyme in this species is believed to be plastoquinone. Couples the redox reaction to proton translocation, and thus conserves the redox energy in a proton gradient. This chain is Photosynthetic NDH subunit of subcomplex B 4, chloroplastic, found in Arabidopsis thaliana (Mouse-ear cress).